The sequence spans 308 residues: D-alanine--D-alanine ligase (308 aa).

One can recognise an ATP-grasp domain in the interval lysine 104–glutamate 301. An ATP-binding site is contributed by isoleucine 130 to threonine 185. Aspartate 255, glutamate 268, and asparagine 270 together coordinate Mg(2+).

The protein belongs to the D-alanine--D-alanine ligase family. Requires Mg(2+) as cofactor. The cofactor is Mn(2+).

It localises to the cytoplasm. The catalysed reaction is 2 D-alanine + ATP = D-alanyl-D-alanine + ADP + phosphate + H(+). It functions in the pathway cell wall biogenesis; peptidoglycan biosynthesis. In terms of biological role, cell wall formation. The chain is D-alanine--D-alanine ligase from Acinetobacter baumannii (strain ACICU).